The chain runs to 152 residues: Large ribosomal subunit protein bL9 (152 aa).

Belongs to the bacterial ribosomal protein bL9 family.

Binds to the 23S rRNA. The chain is Large ribosomal subunit protein bL9 from Chlorobaculum tepidum (strain ATCC 49652 / DSM 12025 / NBRC 103806 / TLS) (Chlorobium tepidum).